A 389-amino-acid chain; its full sequence is Glutamate 5-kinase (389 aa).

Lys-16 is an ATP binding site. Residues Ser-56, Asp-143, and Asn-155 each coordinate substrate. An ATP-binding site is contributed by 175–176 (SD). The PUA domain maps to 281 to 358 (AGGLHVDDGA…AEIEAILGYP (78 aa)).

This sequence belongs to the glutamate 5-kinase family.

The protein resides in the cytoplasm. It carries out the reaction L-glutamate + ATP = L-glutamyl 5-phosphate + ADP. The protein operates within amino-acid biosynthesis; L-proline biosynthesis; L-glutamate 5-semialdehyde from L-glutamate: step 1/2. Catalyzes the transfer of a phosphate group to glutamate to form L-glutamate 5-phosphate. The protein is Glutamate 5-kinase of Rhizobium leguminosarum bv. trifolii (strain WSM2304).